The sequence spans 388 residues: S-adenosylmethionine synthase (388 aa).

Residue His17 coordinates ATP. A Mg(2+)-binding site is contributed by Asp19. Residue Glu45 participates in K(+) binding. 2 residues coordinate L-methionine: Glu58 and Gln102. The interval 102-112 (QSVHIAQGVDA) is flexible loop. Residues 167-169 (DAK), Asp241, 247-248 (RK), Ala264, and Lys268 each bind ATP. Position 241 (Asp241) interacts with L-methionine. Lys272 lines the L-methionine pocket.

Belongs to the AdoMet synthase family. Homotetramer; dimer of dimers. Mg(2+) serves as cofactor. K(+) is required as a cofactor.

It is found in the cytoplasm. It carries out the reaction L-methionine + ATP + H2O = S-adenosyl-L-methionine + phosphate + diphosphate. Its pathway is amino-acid biosynthesis; S-adenosyl-L-methionine biosynthesis; S-adenosyl-L-methionine from L-methionine: step 1/1. In terms of biological role, catalyzes the formation of S-adenosylmethionine (AdoMet) from methionine and ATP. The overall synthetic reaction is composed of two sequential steps, AdoMet formation and the subsequent tripolyphosphate hydrolysis which occurs prior to release of AdoMet from the enzyme. The sequence is that of S-adenosylmethionine synthase from Maricaulis maris (strain MCS10) (Caulobacter maris).